Consider the following 580-residue polypeptide: 3-(3-hydroxy-phenyl)propionate/3-hydroxycinnamic acid hydroxylase (580 aa).

FAD is bound by residues 14 to 43 and 291 to 301; these read DVLVVGAGPVGLTLANILGLQGIRTVVVEE and FRRGRLLLAGD.

It belongs to the PheA/TfdB FAD monooxygenase family. The cofactor is FAD.

The enzyme catalyses 3-(3-hydroxyphenyl)propanoate + NADH + O2 + H(+) = 3-(2,3-dihydroxyphenyl)propanoate + NAD(+) + H2O. It carries out the reaction (2E)-3-(3-hydroxyphenyl)prop-2-enoate + NADH + O2 + H(+) = (2E)-3-(2,3-dihydroxyphenyl)prop-2-enoate + NAD(+) + H2O. The protein operates within aromatic compound metabolism; 3-phenylpropanoate degradation. In terms of biological role, catalyzes the insertion of one atom of molecular oxygen into position 2 of the phenyl ring of 3-(3-hydroxyphenyl)propionate (3-HPP) and hydroxycinnamic acid (3HCI). The chain is 3-(3-hydroxy-phenyl)propionate/3-hydroxycinnamic acid hydroxylase from Mycobacterium avium (strain 104).